The primary structure comprises 426 residues: Tyrosine--tRNA ligase (426 aa).

Tyr35 provides a ligand contact to L-tyrosine. Positions 40–49 (PTADSLHIGH) match the 'HIGH' region motif. 2 residues coordinate L-tyrosine: Tyr172 and Gln176. Positions 232–236 (KLGKS) match the 'KMSKS' region motif. Lys235 serves as a coordination point for ATP. The S4 RNA-binding domain maps to 357–414 (ENIKDILVNSKLSKSKNNAKSVILSSSIRINNKKQKSIDFMFKKEDKLFNLFTLIKKG).

Belongs to the class-I aminoacyl-tRNA synthetase family. TyrS type 1 subfamily. In terms of assembly, homodimer.

The protein resides in the cytoplasm. The enzyme catalyses tRNA(Tyr) + L-tyrosine + ATP = L-tyrosyl-tRNA(Tyr) + AMP + diphosphate + H(+). In terms of biological role, catalyzes the attachment of tyrosine to tRNA(Tyr) in a two-step reaction: tyrosine is first activated by ATP to form Tyr-AMP and then transferred to the acceptor end of tRNA(Tyr). The sequence is that of Tyrosine--tRNA ligase from Wigglesworthia glossinidia brevipalpis.